Here is a 163-residue protein sequence, read N- to C-terminus: MTNIHYHKILILDFGSQYTQLIARRVREIGVYCELWAWDVTEQXIREFAPELYQGRAFKSYRGMGSLGAMAKGSSDRYFQSDNAADKLVPEGIEGRIPYKGYLKEIIHQQMGGLRSCMGLTGCATIDELRTKAEFVRISGAGIKESHVHDVAITKEAPNYRMG.

Belongs to the IMPDH/GMPR family.

This is an uncharacterized protein from Haemophilus influenzae (strain ATCC 51907 / DSM 11121 / KW20 / Rd).